Consider the following 246-residue polypeptide: Mitochondrial inner membrane protease ATP23 homolog (246 aa).

His125 serves as a coordination point for a divalent metal cation. Glu126 is an active-site residue. His129 serves as a coordination point for a divalent metal cation.

The protein belongs to the peptidase M76 family. In terms of assembly, interacts with XRCC6.

This Homo sapiens (Human) protein is Mitochondrial inner membrane protease ATP23 homolog.